The sequence spans 55 residues: Ferredoxin (55 aa).

2 4Fe-4S ferredoxin-type domains span residues 2-27 and 28-55; these read HIIT…HEGT and GKYE…VKAE. Positions 8, 11, 14, 18, 37, 40, 43, and 47 each coordinate [4Fe-4S] cluster.

The cofactor is [4Fe-4S] cluster.

In terms of biological role, ferredoxins are iron-sulfur proteins that transfer electrons in a wide variety of metabolic reactions. The protein is Ferredoxin of Thermoanaerobacterium thermosaccharolyticum (Clostridium thermosaccharolyticum).